The chain runs to 688 residues: MAAEIDFLREQNRRLNEDFRRYQMESFSKYSSVQKAVCQGEGDDTFENLVFDQSFLAPLVTEYDKHLGELNGQLKYYQKQVGEMKLQLENVIKENERLHSELKDAVEKKLEAFPLGTEVGTDIYADDETVRNLQEQLQLANQEKTQAVELWQTVSQELDRLHKLYQEHMTEAQIHVFESQKQKDQLFDFQQLTKQLHVTNENMEVTNQQFLKTVTEQSVIIEQLRKKLRQAKLELRVAVAKVEELTNVTEDLQGQMKKKEKDVVSAHGREEASDRRLQQLQSSIKQLEIRLCVTIQEANQLRTENTHLEKQTRELQAKCNELENERYEAIVRARNSMQLLEEANLQKSQALLEEKQKEEDIEKMKETVSRFVQDATIRTKKEVANTKKQCNIQISRLTEELSALQMECAEKQGQIERVIKEKKAVEEELEKIYREGRGNESDYRKLEEMHQRFLVSERSKDDLQLRLTRAENRIKQLETDSSEEISRYQEMIQKLQNVLESERENCGLVSEQRLKLQQENKQLRKETESLRKIALEAQKKAKVKISTMEHEFSIKERGFEVQLREMEDSNRNSIVELRHLLATQQKAANRWKEETKKLTESAEIRINNLKSELSRQKLHTQELLSQLEMANEKVAENEKLILEHQEKANRLQRRLSQAEERAASASQQLSVITVQRRKAASLMNLENI.

At alanine 2 the chain carries N-acetylalanine. Residues 69 to 673 (ELNGQLKYYQ…SASQQLSVIT (605 aa)) are a coiled coil. Serine 681 carries the post-translational modification Phosphoserine.

As to quaternary structure, interacts with SCN10A and clathrin. Identified in a complex containing SCN10A, clathrin and SCLT1.

Its subcellular location is the cytoplasm. The protein resides in the cytoskeleton. It localises to the microtubule organizing center. It is found in the centrosome. The protein localises to the centriole. In terms of biological role, adapter protein that links SCN10A to clathrin. Regulates SCN10A channel activity, possibly by promoting channel internalization. In Homo sapiens (Human), this protein is Sodium channel and clathrin linker 1 (SCLT1).